The following is a 181-amino-acid chain: ATP-dependent protease subunit HslV (181 aa).

Thr-2 is an active-site residue. The Na(+) site is built by Gly-157, Cys-160, and Thr-163.

It belongs to the peptidase T1B family. HslV subfamily. As to quaternary structure, a double ring-shaped homohexamer of HslV is capped on each side by a ring-shaped HslU homohexamer. The assembly of the HslU/HslV complex is dependent on binding of ATP.

Its subcellular location is the cytoplasm. The catalysed reaction is ATP-dependent cleavage of peptide bonds with broad specificity.. Allosterically activated by HslU binding. Functionally, protease subunit of a proteasome-like degradation complex believed to be a general protein degrading machinery. The sequence is that of ATP-dependent protease subunit HslV from Hahella chejuensis (strain KCTC 2396).